The primary structure comprises 237 residues: MQENRPVIALDFPEFSDVKDFLEKFDPSEKLYIKLGMELFYTAGPQVVYYVKSLGHSVFLDLKLHDIPNTVESSMRVLARLGVDMVNVHAAGGVEMMVAAKRGLEAGTPTGRQRPKLIAVTQLTSTSEEIMQNDQKIMTSLEESVINYAQKTAQAGLDGVVCSAHEVEKIKAATSKEFICLTPGIRPEGASKGDQKRVMTPKEARTIGSDYIVVGRPITQAKDPVSAYHAIKEEWNQ.

Substrate contacts are provided by residues aspartate 11, lysine 34, 61 to 70 (DLKLHDIPNT), threonine 124, arginine 186, glutamine 195, glycine 215, and arginine 216. Lysine 63 serves as the catalytic Proton donor.

Belongs to the OMP decarboxylase family. Type 1 subfamily. Homodimer.

The catalysed reaction is orotidine 5'-phosphate + H(+) = UMP + CO2. The protein operates within pyrimidine metabolism; UMP biosynthesis via de novo pathway; UMP from orotate: step 2/2. Functionally, catalyzes the decarboxylation of orotidine 5'-monophosphate (OMP) to uridine 5'-monophosphate (UMP). This chain is Orotidine 5'-phosphate decarboxylase, found in Lactococcus lactis subsp. cremoris (strain SK11).